The sequence spans 568 residues: Transport inhibitor response 1-like protein Os11g0515500 (568 aa).

One can recognise an F-box domain in the interval 1 to 45 (MVFFPEEVVEHILGFLASHRDRNAVSLVCREWYRVERLSRRSVLV). 1D-myo-inositol hexakisphosphate-binding positions include lysine 69, 103–104 (KR), and arginine 335. An interaction with auxin-responsive proteins region spans residues 338–343 (PANANA). A 1D-myo-inositol hexakisphosphate-binding site is contributed by 390-392 (SFR). The segment at 394-398 (CVLDP) is interaction with auxin-responsive proteins. Residue arginine 425 participates in 1D-myo-inositol hexakisphosphate binding. Residues 453-454 (AF) form an interaction with auxin-responsive proteins region. Residues 473 to 474 (KK) and arginine 498 contribute to the 1D-myo-inositol hexakisphosphate site.

Part of a SCF (SKP1-cullin-F-box) protein ligase complex. May interact with auxin and auxin-responsive proteins.

It localises to the nucleus. It participates in protein modification; protein ubiquitination. This chain is Transport inhibitor response 1-like protein Os11g0515500, found in Oryza sativa subsp. japonica (Rice).